Here is a 396-residue protein sequence, read N- to C-terminus: Tryptophan synthase beta chain (396 aa).

Lys86 carries the N6-(pyridoxal phosphate)lysine modification.

It belongs to the TrpB family. As to quaternary structure, tetramer of two alpha and two beta chains. The cofactor is pyridoxal 5'-phosphate.

It carries out the reaction (1S,2R)-1-C-(indol-3-yl)glycerol 3-phosphate + L-serine = D-glyceraldehyde 3-phosphate + L-tryptophan + H2O. The protein operates within amino-acid biosynthesis; L-tryptophan biosynthesis; L-tryptophan from chorismate: step 5/5. The beta subunit is responsible for the synthesis of L-tryptophan from indole and L-serine. The polypeptide is Tryptophan synthase beta chain (Francisella tularensis subsp. tularensis (strain FSC 198)).